We begin with the raw amino-acid sequence, 1692 residues long: Cullin-7 (1692 aa).

Residues 348-421 (RTAFASVNTY…HWHMLEILGF (74 aa)) enclose the CPH domain. The region spanning 791 to 970 (PIQIPFFDVF…HTRLFYMVRA (180 aa)) is the DOC domain. The span at 1319-1335 (VAHEDSGKEHKSKKEDA) shows a compositional bias: basic and acidic residues. The tract at residues 1319–1374 (VAHEDSGKEHKSKKEDAAGETAAVAMADEEEEEGKKEEGEEEEGEGEEELEEEEER) is disordered. Residues 1357 to 1374 (GEEEEGEGEEELEEEEER) show a composition bias toward acidic residues. K1570 is covalently cross-linked (Glycyl lysine isopeptide (Lys-Gly) (interchain with G-Cter in NEDD8)).

Belongs to the cullin family. Component of the 3M complex, composed of core components CUL7, CCDC8 and OBSL1. Component of the Cul7-RING(FBXW8) complex consisting of CUL7, RBX1, SKP1 and FBXW8. Within the Cul7-RING(FBXW8) complex interacts with FBXW8 and RBX1, but not with SKP1. Interacts with CUL1 (via the C-terminal domain); the interaction seems to be mediated by FBXW8; it is likely specific to FBXW8, but not other F-box proteins. Interacts (via the CPH domain) with p53/TP53; the interaction preferentially involves tetrameric and dimeric p53/TP53; this interaction recruits p53/TP53 for ubiquitination by neddylated CUL1-RBX1. The CUL7-CUL9 heterodimer seems to interact specifically with p53/TP53. Interacts with FBXW8; interaction is mutually exclusive of binding to CUL9 or p53/TP53. Interacts with CUL9; leading to inhibited CUL9 activity. Interacts with OBSL1. Interacts (as part of the 3M complex) with HDAC4 and HDAC5; it is negatively regulated by ANKRA2.

It localises to the cytoplasm. The protein localises to the cytoskeleton. Its subcellular location is the microtubule organizing center. It is found in the centrosome. The protein resides in the perinuclear region. It localises to the golgi apparatus. Its pathway is protein modification; protein ubiquitination. Core component of the 3M and Cul7-RING(FBXW8) complexes, which mediate the ubiquitination and subsequent proteasomal degradation of target proteins. Core component of the 3M complex, a complex required to regulate microtubule dynamics and genome integrity. It is unclear how the 3M complex regulates microtubules, it could act by controlling the level of a microtubule stabilizer. The Cul7-RING(FBXW8) complex alone lacks ubiquitination activity and does not promote polyubiquitination and proteasomal degradation of p53/TP53. However it mediates recruitment of p53/TP53 for ubiquitination by neddylated CUL1-RBX1. Interaction with CUL9 is required to inhibit CUL9 activity and ubiquitination of BIRC5. The Cul7-RING(FBXW8) complex also mediates ubiquitination and consequent degradation of target proteins such as GORASP1, IRS1 and MAP4K1/HPK1. Ubiquitination of GORASP1 regulates Golgi morphogenesis and dendrite patterning in brain. Mediates ubiquitination and degradation of IRS1 in a mTOR-dependent manner: the Cul7-RING(FBXW8) complex recognizes and binds IRS1 previously phosphorylated by S6 kinase (RPS6KB1 or RPS6KB2). The Cul7-RING(FBXW8) complex also mediates ubiquitination of MAP4K1/HPK1: recognizes and binds autophosphorylated MAP4K1/HPK1, leading to its degradation, thereby affecting cell proliferation and differentiation. Acts as a regulator in trophoblast cell epithelial-mesenchymal transition and placental development. While the Cul7-RING(FBXW8) and the 3M complexes are associated and involved in common processes, CUL7 and the Cul7-RING(FBXW8) complex may have additional functions. Probably plays a role in the degradation of proteins involved in endothelial proliferation and/or differentiation. This chain is Cullin-7 (Cul7), found in Rattus norvegicus (Rat).